Here is a 127-residue protein sequence, read N- to C-terminus: Large ribosomal subunit protein uL22 (127 aa).

It belongs to the universal ribosomal protein uL22 family. As to quaternary structure, part of the 50S ribosomal subunit.

Its function is as follows. This protein binds specifically to 23S rRNA; its binding is stimulated by other ribosomal proteins, e.g. L4, L17, and L20. It is important during the early stages of 50S assembly. It makes multiple contacts with different domains of the 23S rRNA in the assembled 50S subunit and ribosome. In terms of biological role, the globular domain of the protein is located near the polypeptide exit tunnel on the outside of the subunit, while an extended beta-hairpin is found that lines the wall of the exit tunnel in the center of the 70S ribosome. The protein is Large ribosomal subunit protein uL22 of Brucella suis (strain ATCC 23445 / NCTC 10510).